Reading from the N-terminus, the 448-residue chain is MKKINLDYSKVFNFISQDELNQIKVSIDKVAEKLHNKSGAGNNFLGWLDLPINYDKEEFSRIKKASEKIKADSDVLIVIGIGGSYLGARAVIECLSHSFFNSLNKEKRNAPEIYFAGQNISGRYLKDLIEIIGDRDFSVNIISKSGTTTEPAIAFRVFKELLENKYGEKAKDRIYVTTDKNKGALKKLADEKGYEKFVIPDDVGGRFSVLTAVGLLPIAVAGINIDALMNGAQIAREDYSKDFADNDCYKYAAIRNILYKKNYNIEILANYEPKFHYISEWWKQLYGESEGKDKKGIFPASVDLTTDLHSMGQYIQDGRRNLMETILNVENSDKDIVIKKEVEDLDGLNYLEGKGLSFVNNKAFEGTLLAHIDGGVPNLVINIPEVTAFNIGYLIYFFEKACAISGYLLEVNPFDQPGVESYKKNMFALLGKKGYEELSKELNERLKK.

The active-site Proton donor is Glu-288. Catalysis depends on residues His-309 and Lys-423.

This sequence belongs to the GPI family.

It localises to the cytoplasm. It carries out the reaction alpha-D-glucose 6-phosphate = beta-D-fructose 6-phosphate. It participates in carbohydrate biosynthesis; gluconeogenesis. The protein operates within carbohydrate degradation; glycolysis; D-glyceraldehyde 3-phosphate and glycerone phosphate from D-glucose: step 2/4. In terms of biological role, catalyzes the reversible isomerization of glucose-6-phosphate to fructose-6-phosphate. This Fusobacterium nucleatum subsp. nucleatum (strain ATCC 25586 / DSM 15643 / BCRC 10681 / CIP 101130 / JCM 8532 / KCTC 2640 / LMG 13131 / VPI 4355) protein is Glucose-6-phosphate isomerase.